We begin with the raw amino-acid sequence, 287 residues long: Protease HtpX (287 aa).

Helical transmembrane passes span 4-24 (IFLL…VMSI) and 33-53 (GGLL…SLAI). Histidine 139 lines the Zn(2+) pocket. Glutamate 140 is a catalytic residue. A Zn(2+)-binding site is contributed by histidine 143. A run of 2 helical transmembrane segments spans residues 154 to 174 (LIQG…AGII) and 195 to 215 (AVVF…VAYF). A Zn(2+)-binding site is contributed by glutamate 220.

The protein belongs to the peptidase M48B family. The cofactor is Zn(2+).

It localises to the cell inner membrane. In Shewanella pealeana (strain ATCC 700345 / ANG-SQ1), this protein is Protease HtpX.